A 243-amino-acid chain; its full sequence is Type III pantothenate kinase (243 aa).

6–13 (DIGNTVAK) lines the ATP pocket. Substrate is bound by residues tyrosine 86 and 93-96 (GYDR). Residue aspartate 95 is the Proton acceptor of the active site. Aspartate 116 lines the K(+) pocket. Threonine 119 lines the ATP pocket. Threonine 171 lines the substrate pocket.

The protein belongs to the type III pantothenate kinase family. As to quaternary structure, homodimer. The cofactor is NH4(+). It depends on K(+) as a cofactor.

Its subcellular location is the cytoplasm. The enzyme catalyses (R)-pantothenate + ATP = (R)-4'-phosphopantothenate + ADP + H(+). Its pathway is cofactor biosynthesis; coenzyme A biosynthesis; CoA from (R)-pantothenate: step 1/5. Its function is as follows. Catalyzes the phosphorylation of pantothenate (Pan), the first step in CoA biosynthesis. The protein is Type III pantothenate kinase of Bacteroides fragilis (strain ATCC 25285 / DSM 2151 / CCUG 4856 / JCM 11019 / LMG 10263 / NCTC 9343 / Onslow / VPI 2553 / EN-2).